Reading from the N-terminus, the 555-residue chain is 2-succinyl-5-enolpyruvyl-6-hydroxy-3-cyclohexene-1-carboxylate synthase (555 aa).

This sequence belongs to the TPP enzyme family. MenD subfamily. Homodimer. It depends on Mg(2+) as a cofactor. Requires Mn(2+) as cofactor. Thiamine diphosphate serves as cofactor.

The enzyme catalyses isochorismate + 2-oxoglutarate + H(+) = 5-enolpyruvoyl-6-hydroxy-2-succinyl-cyclohex-3-ene-1-carboxylate + CO2. It functions in the pathway quinol/quinone metabolism; 1,4-dihydroxy-2-naphthoate biosynthesis; 1,4-dihydroxy-2-naphthoate from chorismate: step 2/7. It participates in quinol/quinone metabolism; menaquinone biosynthesis. Catalyzes the thiamine diphosphate-dependent decarboxylation of 2-oxoglutarate and the subsequent addition of the resulting succinic semialdehyde-thiamine pyrophosphate anion to isochorismate to yield 2-succinyl-5-enolpyruvyl-6-hydroxy-3-cyclohexene-1-carboxylate (SEPHCHC). This is 2-succinyl-5-enolpyruvyl-6-hydroxy-3-cyclohexene-1-carboxylate synthase from Bacteroides fragilis (strain ATCC 25285 / DSM 2151 / CCUG 4856 / JCM 11019 / LMG 10263 / NCTC 9343 / Onslow / VPI 2553 / EN-2).